The chain runs to 137 residues: Large ribosomal subunit protein uL16 (137 aa).

This sequence belongs to the universal ribosomal protein uL16 family. In terms of assembly, part of the 50S ribosomal subunit.

Binds 23S rRNA and is also seen to make contacts with the A and possibly P site tRNAs. This is Large ribosomal subunit protein uL16 from Mycoplasma capricolum subsp. capricolum (strain California kid / ATCC 27343 / NCTC 10154).